We begin with the raw amino-acid sequence, 557 residues long: uncharacterized protein (557 aa).

Residues 7–206 (SSFIDMLRLG…FACFLEGMLS (200 aa)) enclose the DhaL domain.

This is an uncharacterized protein from Mycoplasma genitalium (strain ATCC 33530 / DSM 19775 / NCTC 10195 / G37) (Mycoplasmoides genitalium).